The chain runs to 82 residues: Penaeidin-3h (82 aa).

The first 19 residues, 1–19 (MRLVVCLVFLASFALVCQG), serve as a signal peptide directing secretion. The residue at position 20 (glutamine 20) is a Pyrrolidone carboxylic acid. Cystine bridges form between cysteine 55–cysteine 73 and cysteine 67–cysteine 74. Residue serine 81 is modified to Serine amide.

Belongs to the penaeidin family.

Its subcellular location is the cytoplasmic granule. Functionally, antibacterial and antifungal activity. Presents chitin-binding activity. This chain is Penaeidin-3h, found in Penaeus vannamei (Whiteleg shrimp).